Here is a 429-residue protein sequence, read N- to C-terminus: Stromal membrane-associated protein 2 (429 aa).

Residues 13-137 (QAVLANLLLE…LDINAFRKEK (125 aa)) form the Arf-GAP domain. A C4-type zinc finger spans residues 28–51 (CADCQSKGPRWASWNIGVFICIRC). Ser-127 is modified (phosphoserine). A compositionally biased stretch (basic and acidic residues) spans 138 to 172 (DNKWKRGSEPAPEKKMEPVVFEKVKMPQKKEDPQL). Disordered regions lie at residues 138–181 (DNKW…PKSK) and 217–263 (VSSP…KKQL). Residues 163-232 (MPQKKEDPQL…SVSRKVVGSM (70 aa)) are interaction with clathrin heavy chains. The segment covering 217-231 (VSSPSSSVSRKVVGS) has biased composition (low complexity). 5 positions are modified to phosphoserine: Ser-219, Ser-223, Ser-225, Ser-231, and Ser-240. Residues 253-263 (SKSEETSKKQL) are compositionally biased toward basic and acidic residues. An interaction with PICALM region spans residues 340-429 (MGGMQASMMG…NQTLSPQMWK (90 aa)).

In terms of assembly, interacts with ARF1. Interacts with PICALM and clathrin heavy chains.

The protein resides in the cytoplasm. GTPase activating protein that acts on ARF1. Can also activate ARF6 (in vitro). May play a role in clathrin-dependent retrograde transport from early endosomes to the trans-Golgi network. The chain is Stromal membrane-associated protein 2 (SMAP2) from Bos taurus (Bovine).